A 193-amino-acid chain; its full sequence is Molybdopterin synthase catalytic subunit (193 aa).

Residues 118–119 (HR), lysine 134, and 141–143 (KKE) each bind substrate. Residues 159–193 (DRTTTDGTTASSPAPATRPAKGGGCCGRKVRVNES) form a disordered region. Residues 163 to 178 (TDGTTASSPAPATRPA) show a composition bias toward low complexity.

This sequence belongs to the MoaE family. MOCS2B subfamily. In terms of assembly, heterotetramer; composed of 2 small (MOCS2A) and 2 large (MOCS2B) subunits.

The protein localises to the cytoplasm. The enzyme catalyses 2 [molybdopterin-synthase sulfur-carrier protein]-C-terminal-Gly-aminoethanethioate + cyclic pyranopterin phosphate + H2O = molybdopterin + 2 [molybdopterin-synthase sulfur-carrier protein]-C-terminal Gly-Gly + 2 H(+). The protein operates within cofactor biosynthesis; molybdopterin biosynthesis. Catalytic subunit of the molybdopterin synthase complex, a complex that catalyzes the conversion of precursor Z into molybdopterin. Acts by mediating the incorporation of 2 sulfur atoms from thiocarboxylated MOCS2A into precursor Z to generate a dithiolene group. In Oryza sativa subsp. japonica (Rice), this protein is Molybdopterin synthase catalytic subunit.